A 101-amino-acid chain; its full sequence is Small ribosomal subunit protein uS14 (101 aa).

Residues 1–26 (MAKVSSIKKNESRKKKSQSLHNKRSA) form a disordered region. The span at 11–26 (ESRKKKSQSLHNKRSA) shows a compositional bias: basic residues.

It belongs to the universal ribosomal protein uS14 family. Part of the 30S ribosomal subunit. Contacts proteins S3 and S10.

Functionally, binds 16S rRNA, required for the assembly of 30S particles and may also be responsible for determining the conformation of the 16S rRNA at the A site. The sequence is that of Small ribosomal subunit protein uS14 from Rickettsia felis (strain ATCC VR-1525 / URRWXCal2) (Rickettsia azadi).